Here is a 233-residue protein sequence, read N- to C-terminus: Snake venom serine protease BthaTL (233 aa).

Residues 1–224 enclose the Peptidase S1 domain; the sequence is VIGGDECDIN…YLPWIQSIIA (224 aa). 6 disulfide bridges follow: Cys-7-Cys-138, Cys-25-Cys-41, Cys-73-Cys-231, Cys-117-Cys-185, Cys-149-Cys-164, and Cys-175-Cys-200. Catalysis depends on charge relay system residues His-40 and Asp-85. The active-site Charge relay system is Ser-179.

The protein belongs to the peptidase S1 family. Snake venom subfamily. Monomer. As to expression, expressed by the venom gland.

It localises to the secreted. Its function is as follows. Snake venom serine protease that may act in the hemostasis system of the prey. The protein is Snake venom serine protease BthaTL of Bothrops alternatus (Urutu).